A 201-amino-acid polypeptide reads, in one-letter code: Holliday junction branch migration complex subunit RuvA (201 aa).

The tract at residues 1 to 63 (MISHFSGTVS…EESLTLYGFV (63 aa)) is domain I. The tract at residues 64–142 (EADDRDAFEL…ALAPRGASAS (79 aa)) is domain II. The interval 143–153 (GATHVAAPWRE) is flexible linker. Residues 153-201 (EQVAEGLVGLGWSTKDAEKAVDKVVALKEADPAMSIGNLMRAALRSLAR) form a domain III region.

Belongs to the RuvA family. In terms of assembly, homotetramer. Forms an RuvA(8)-RuvB(12)-Holliday junction (HJ) complex. HJ DNA is sandwiched between 2 RuvA tetramers; dsDNA enters through RuvA and exits via RuvB. An RuvB hexamer assembles on each DNA strand where it exits the tetramer. Each RuvB hexamer is contacted by two RuvA subunits (via domain III) on 2 adjacent RuvB subunits; this complex drives branch migration. In the full resolvosome a probable DNA-RuvA(4)-RuvB(12)-RuvC(2) complex forms which resolves the HJ.

The protein resides in the cytoplasm. Functionally, the RuvA-RuvB-RuvC complex processes Holliday junction (HJ) DNA during genetic recombination and DNA repair, while the RuvA-RuvB complex plays an important role in the rescue of blocked DNA replication forks via replication fork reversal (RFR). RuvA specifically binds to HJ cruciform DNA, conferring on it an open structure. The RuvB hexamer acts as an ATP-dependent pump, pulling dsDNA into and through the RuvAB complex. HJ branch migration allows RuvC to scan DNA until it finds its consensus sequence, where it cleaves and resolves the cruciform DNA. The polypeptide is Holliday junction branch migration complex subunit RuvA (Cutibacterium acnes (strain DSM 16379 / KPA171202) (Propionibacterium acnes)).